A 460-amino-acid chain; its full sequence is Endoglucanase 2 (460 aa).

The N-terminal stretch at 1 to 32 is a signal peptide; that stretch reads MIKGSSLKRIKSLVMMAIFSVSIITTAIVSSA. Glu99 functions as the Proton donor in the catalytic mechanism. Catalysis depends on Asp155, which acts as the Nucleophile. Positions 400-460 constitute a Dockerin domain; that stretch reads QQGLKGDVNN…FAQLKVKLLN (61 aa).

The protein belongs to the glycosyl hydrolase 8 (cellulase D) family.

It carries out the reaction Endohydrolysis of (1-&gt;4)-beta-D-glucosidic linkages in cellulose, lichenin and cereal beta-D-glucans.. This is Endoglucanase 2 (celB) from Ruminiclostridium josui (Clostridium josui).